Here is a 971-residue protein sequence, read N- to C-terminus: GEM-interacting protein (971 aa).

The residue at position 19 (S19) is a Phosphoserine. Disordered stretches follow at residues 41-79 (AGDP…PEGP), 231-267 (LRAR…AQAK), and 383-476 (DTKK…IENG). Residues 44-56 (PVRREDLEPDKAD) are compositionally biased toward basic and acidic residues. Over residues 59–69 (TVVTEENSEAS) the composition is skewed to polar residues. Phosphoserine occurs at positions 75, 235, 238, 247, 436, and 440. The region spanning 85–348 (EELDLRLIRT…CCVPFEPGQR (264 aa)) is the F-BAR domain. A compositionally biased stretch (acidic residues) spans 458 to 471 (SSDDFEERDPDLGD). Residues 492–536 (THRLRRLRGPAKCRECEAFMVSGTECEECFLTCHKRCLETLLILC) form a Phorbol-ester/DAG-type zinc finger. Residues 553-756 (LQLPRDFPEE…FLIVHYEQIF (204 aa)) form the Rho-GAP domain. A Phosphothreonine modification is found at T659. Residues 799-865 (IALDSSPDPK…LGAQSRGHFS (67 aa)) form a disordered region. The segment covering 805–817 (PDPKHHSALEKCP) has biased composition (basic and acidic residues). 3 positions are modified to phosphoserine: S884, S908, and S924.

As to quaternary structure, interacts with GEM through its N-terminal.

Its function is as follows. Stimulates, in vitro and in vivo, the GTPase activity of RhoA. The sequence is that of GEM-interacting protein (Gmip) from Mus musculus (Mouse).